Reading from the N-terminus, the 759-residue chain is Phosphoribosylformylglycinamidine synthase subunit PurL (759 aa).

Residue H48 is part of the active site. The ATP site is built by Y51 and K91. E93 is a binding site for Mg(2+). Residues 94-97 (SHNH) and R116 each bind substrate. The active-site Proton acceptor is the H95. D117 serves as a coordination point for Mg(2+). A substrate-binding site is contributed by Q240. D268 provides a ligand contact to Mg(2+). 317–319 (ESQ) contacts substrate. 2 residues coordinate ATP: N501 and G538. N539 serves as a coordination point for Mg(2+). Substrate is bound at residue S541.

The protein belongs to the FGAMS family. As to quaternary structure, monomer. Part of the FGAM synthase complex composed of 1 PurL, 1 PurQ and 2 PurS subunits.

The protein resides in the cytoplasm. The catalysed reaction is N(2)-formyl-N(1)-(5-phospho-beta-D-ribosyl)glycinamide + L-glutamine + ATP + H2O = 2-formamido-N(1)-(5-O-phospho-beta-D-ribosyl)acetamidine + L-glutamate + ADP + phosphate + H(+). It functions in the pathway purine metabolism; IMP biosynthesis via de novo pathway; 5-amino-1-(5-phospho-D-ribosyl)imidazole from N(2)-formyl-N(1)-(5-phospho-D-ribosyl)glycinamide: step 1/2. Its function is as follows. Part of the phosphoribosylformylglycinamidine synthase complex involved in the purines biosynthetic pathway. Catalyzes the ATP-dependent conversion of formylglycinamide ribonucleotide (FGAR) and glutamine to yield formylglycinamidine ribonucleotide (FGAM) and glutamate. The FGAM synthase complex is composed of three subunits. PurQ produces an ammonia molecule by converting glutamine to glutamate. PurL transfers the ammonia molecule to FGAR to form FGAM in an ATP-dependent manner. PurS interacts with PurQ and PurL and is thought to assist in the transfer of the ammonia molecule from PurQ to PurL. The polypeptide is Phosphoribosylformylglycinamidine synthase subunit PurL (Chlorobaculum tepidum (strain ATCC 49652 / DSM 12025 / NBRC 103806 / TLS) (Chlorobium tepidum)).